The following is a 356-amino-acid chain: UDP-N-acetylglucosamine--N-acetylmuramyl-(pentapeptide) pyrophosphoryl-undecaprenol N-acetylglucosamine transferase (356 aa).

UDP-N-acetyl-alpha-D-glucosamine-binding positions include 12 to 14, asparagine 124, arginine 163, serine 188, isoleucine 242, 261 to 266, and glutamine 287; these read TGG and ALTVSE.

Belongs to the glycosyltransferase 28 family. MurG subfamily.

The protein localises to the cell inner membrane. It catalyses the reaction di-trans,octa-cis-undecaprenyl diphospho-N-acetyl-alpha-D-muramoyl-L-alanyl-D-glutamyl-meso-2,6-diaminopimeloyl-D-alanyl-D-alanine + UDP-N-acetyl-alpha-D-glucosamine = di-trans,octa-cis-undecaprenyl diphospho-[N-acetyl-alpha-D-glucosaminyl-(1-&gt;4)]-N-acetyl-alpha-D-muramoyl-L-alanyl-D-glutamyl-meso-2,6-diaminopimeloyl-D-alanyl-D-alanine + UDP + H(+). The protein operates within cell wall biogenesis; peptidoglycan biosynthesis. In terms of biological role, cell wall formation. Catalyzes the transfer of a GlcNAc subunit on undecaprenyl-pyrophosphoryl-MurNAc-pentapeptide (lipid intermediate I) to form undecaprenyl-pyrophosphoryl-MurNAc-(pentapeptide)GlcNAc (lipid intermediate II). The polypeptide is UDP-N-acetylglucosamine--N-acetylmuramyl-(pentapeptide) pyrophosphoryl-undecaprenol N-acetylglucosamine transferase (Azotobacter vinelandii (strain DJ / ATCC BAA-1303)).